The chain runs to 151 residues: UPF0756 membrane protein Aflv_0503 (151 aa).

Transmembrane regions (helical) follow at residues 4-24, 52-72, 85-105, and 115-135; these read FIFLFILLVIGMMAKNQSLII, LGVTIITIAVLVPIATGKIGF, WIAMLSGIAVALLAKGGVALL, and LVLGTILAVSLFKGVAVGPLI.

It belongs to the UPF0756 family.

It localises to the cell membrane. The polypeptide is UPF0756 membrane protein Aflv_0503 (Anoxybacillus flavithermus (strain DSM 21510 / WK1)).